Consider the following 552-residue polypeptide: Hydroxylamine reductase (552 aa).

The [2Fe-2S] cluster site is built by cysteine 3, cysteine 6, cysteine 18, and cysteine 25. Residues histidine 250, glutamate 274, cysteine 318, cysteine 406, cysteine 434, cysteine 459, glutamate 493, and lysine 495 each contribute to the hybrid [4Fe-2O-2S] cluster site. Cysteine 406 carries the cysteine persulfide modification.

The protein belongs to the HCP family. It depends on [2Fe-2S] cluster as a cofactor. The cofactor is hybrid [4Fe-2O-2S] cluster.

Its subcellular location is the cytoplasm. It catalyses the reaction A + NH4(+) + H2O = hydroxylamine + AH2 + H(+). Its function is as follows. Catalyzes the reduction of hydroxylamine to form NH(3) and H(2)O. The polypeptide is Hydroxylamine reductase (Shewanella woodyi (strain ATCC 51908 / MS32)).